The following is a 331-amino-acid chain: Light-harvesting complex I LH35 proteins (331 aa).

It is found in the plastid. The protein localises to the chloroplast. The chain is Light-harvesting complex I LH35 proteins from Euglena gracilis.